The chain runs to 807 residues: 1-phosphatidylinositol 4,5-bisphosphate phosphodiesterase delta-4 (807 aa).

In terms of domain architecture, PH spans 16–124 (LLMQEGTMMR…WMRGLQLLVD (109 aa)). Positions 26 to 53 (KVRTKSWKKLRYFRLQNDGMTVWHGSQP) are substrate binding. EF-hand domains are found at residues 134 to 169 (QMDQ…MNVE), 170 to 205 (MDEE…LTKR), and 203 to 237 (TKRT…EQKE). The Ca(2+) site is built by D147, N149, D151, R153, E158, D183, S187, D189, and E194. The GBA signature appears at 213–243 (EDFSSDKQKLTLLEFVDFLRKEQKEKDHAPD). A PI-PLC X-box domain is found at 290–435 (QDMTQPLSHY…LRGKILVKGK (146 aa)). H305 is an active-site residue. Residues N306, E335, and D337 each contribute to the Ca(2+) site. H350 is an active-site residue. E384 lines the Ca(2+) pocket. Substrate is bound by residues K433 and K435. The tract at residues 442–490 (VDKEEEEEEEEEELEKDEGPDLDPASPELDTQPQPETQGQAAGNKKERK) is disordered. Over residues 443–462 (DKEEEEEEEEEELEKDEGPD) the composition is skewed to acidic residues. Residues 470–482 (LDTQPQPETQGQA) are compositionally biased toward polar residues. The PI-PLC Y-box domain occupies 538–654 (LSALVVYLRT…GYVLKPEFLR (117 aa)). 2 residues coordinate substrate: S567 and R594. Positions 654–781 (RDTQSSFNPE…QGYRHVSLLS (128 aa)) constitute a C2 domain. Residues D697, N721, D750, and Y751 each contribute to the Ca(2+) site. The PDZ-binding motif lies at 776–779 (HVSL).

In terms of assembly, interacts with GRIP1. Interacts (via GBA motif) with guanine nucleotide-binding protein G(i) alpha subunit GNAI3 (inactive GDP-bound form)l low-affinity interaction. The cofactor is Ca(2+).

The protein localises to the membrane. It localises to the nucleus. It is found in the cytoplasm. The protein resides in the endoplasmic reticulum. The catalysed reaction is a 1,2-diacyl-sn-glycero-3-phospho-(1D-myo-inositol-4,5-bisphosphate) + H2O = 1D-myo-inositol 1,4,5-trisphosphate + a 1,2-diacyl-sn-glycerol + H(+). The enzyme catalyses a 1,2-diacyl-sn-glycero-3-phospho-(1D-myo-inositol) + H2O = 1D-myo-inositol 1-phosphate + a 1,2-diacyl-sn-glycerol + H(+). Functionally, hydrolyzes the phosphatidylinositol 4,5-bisphosphate (PIP2) to generate 2 second messenger molecules diacylglycerol (DAG) and inositol 1,4,5-trisphosphate (IP3). DAG mediates the activation of protein kinase C (PKC), while IP3 releases Ca(2+) from intracellular stores. Required for acrosome reaction in sperm during fertilization, probably by acting as an important enzyme for intracellular Ca(2+) mobilization in the zona pellucida-induced acrosome reaction. May play a role in cell growth. Modulates the liver regeneration in cooperation with nuclear PKC. Overexpression up-regulates the Erk signaling pathway and proliferation. This chain is 1-phosphatidylinositol 4,5-bisphosphate phosphodiesterase delta-4, found in Mus musculus (Mouse).